The following is a 514-amino-acid chain: 2,3-bisphosphoglycerate-independent phosphoglycerate mutase (514 aa).

Mn(2+)-binding residues include Asp13 and Ser63. Ser63 functions as the Phosphoserine intermediate in the catalytic mechanism. Residues His124, 154-155 (RD), Arg186, Arg192, 258-261 (RADR), and Lys332 each bind substrate. Asp399, His403, Asp440, His441, and His459 together coordinate Mn(2+).

Belongs to the BPG-independent phosphoglycerate mutase family. As to quaternary structure, monomer. The cofactor is Mn(2+).

The catalysed reaction is (2R)-2-phosphoglycerate = (2R)-3-phosphoglycerate. It functions in the pathway carbohydrate degradation; glycolysis; pyruvate from D-glyceraldehyde 3-phosphate: step 3/5. Catalyzes the interconversion of 2-phosphoglycerate and 3-phosphoglycerate. This Legionella pneumophila subsp. pneumophila (strain Philadelphia 1 / ATCC 33152 / DSM 7513) protein is 2,3-bisphosphoglycerate-independent phosphoglycerate mutase.